The primary structure comprises 93 residues: UPF0728 protein C10orf53 homolog (93 aa).

Belongs to the UPF0728 family.

The polypeptide is UPF0728 protein C10orf53 homolog (Mus musculus (Mouse)).